Here is a 227-residue protein sequence, read N- to C-terminus: Pro-thyrotropin-releasing hormone-A (227 aa).

An N-terminal signal peptide occupies residues 1–15; sequence MVSVWWLLLLGTTVS. Residue Gln-75 is modified to Pyrrolidone carboxylic acid. Pro-77 is subject to Proline amide. Gln-89 is modified (pyrrolidone carboxylic acid). Proline amide is present on Pro-91. Gln-107 is modified (pyrrolidone carboxylic acid). 2 disordered regions span residues 107–128 and 151–204; these read QHPG…KREE and RRQH…PCEG. Pro-109 carries the proline amide modification. Basic and acidic residues predominate over residues 112–128; that stretch reads RFVDDVEKRQHPGKREE. A Pyrrolidone carboxylic acid modification is found at Gln-121. The residue at position 123 (Pro-123) is a Proline amide. Gln-153 carries the post-translational modification Pyrrolidone carboxylic acid. Pro-155 bears the Proline amide mark. Gln-168 is subject to Pyrrolidone carboxylic acid. Pro-170 carries the proline amide modification. Residues 184–201 show a composition bias toward basic and acidic residues; that stretch reads ENSKEVGKRQHPGKRYDP. The residue at position 193 (Gln-193) is a Pyrrolidone carboxylic acid. The residue at position 195 (Pro-195) is a Proline amide.

Belongs to the TRH family.

Its subcellular location is the secreted. The protein is Pro-thyrotropin-releasing hormone-A (trh-a) of Xenopus laevis (African clawed frog).